We begin with the raw amino-acid sequence, 66 residues long: Large ribosomal subunit protein uL29 (66 aa).

It belongs to the universal ribosomal protein uL29 family.

This Petrotoga mobilis (strain DSM 10674 / SJ95) protein is Large ribosomal subunit protein uL29.